The chain runs to 95 residues: Cell division topological specificity factor (95 aa).

Belongs to the MinE family.

Its function is as follows. Prevents the cell division inhibition by proteins MinC and MinD at internal division sites while permitting inhibition at polar sites. This ensures cell division at the proper site by restricting the formation of a division septum at the midpoint of the long axis of the cell. The protein is Cell division topological specificity factor of Synechococcus sp. (strain CC9902).